Reading from the N-terminus, the 101-residue chain is Large ribosomal subunit protein bL21 (101 aa).

This sequence belongs to the bacterial ribosomal protein bL21 family. In terms of assembly, part of the 50S ribosomal subunit. Contacts protein L20.

Functionally, this protein binds to 23S rRNA in the presence of protein L20. The protein is Large ribosomal subunit protein bL21 of Corynebacterium glutamicum (strain R).